The chain runs to 334 residues: O(6)-methylguanine-induced apoptosis 2 (334 aa).

The disordered stretch occupies residues 1 to 60; that stretch reads MDNSAQKNERTGKHPRRASEVQKGFTAAYPTQSSIPFKSQASVIPESEKKGFNSQAKRFP. Residues 7–20 show a composition bias toward basic and acidic residues; sequence KNERTGKHPRRASE. Polar residues predominate over residues 29-42; sequence YPTQSSIPFKSQAS. 7 STPGR repeats span residues 67 to 74, 109 to 117, 148 to 155, 187 to 206, 225 to 257, 267 to 282, and 306 to 316; these read PGPGFYNV, PAANAYTIP, PAPNYYNA, GPPPGHYDINESLVKQSPNT, GPGPGYYNPSDCTKVPKKTLFPKNPILNFSAQP, PGPGQYEIVDYLGPRK, and LPGPATYKPEL. At Tyr-72 the chain carries Phosphotyrosine.

The protein belongs to the STPG1 family.

Its subcellular location is the cytoplasm. The protein localises to the nucleus. In terms of biological role, may positively contribute to the induction of apoptosis triggered by O(6)-methylguanine. This Homo sapiens (Human) protein is O(6)-methylguanine-induced apoptosis 2 (STPG1).